The sequence spans 317 residues: Acetyl-coenzyme A carboxylase carboxyl transferase subunit beta (317 aa).

The CoA carboxyltransferase N-terminal domain occupies leucine 30 to lysine 299. Positions 34, 37, 53, and 56 each coordinate Zn(2+). A C4-type zinc finger spans residues cysteine 34–cysteine 56.

The protein belongs to the AccD/PCCB family. Acetyl-CoA carboxylase is a heterohexamer composed of biotin carboxyl carrier protein (AccB), biotin carboxylase (AccC) and two subunits each of ACCase subunit alpha (AccA) and ACCase subunit beta (AccD). Zn(2+) serves as cofactor.

Its subcellular location is the cytoplasm. The catalysed reaction is N(6)-carboxybiotinyl-L-lysyl-[protein] + acetyl-CoA = N(6)-biotinyl-L-lysyl-[protein] + malonyl-CoA. Its pathway is lipid metabolism; malonyl-CoA biosynthesis; malonyl-CoA from acetyl-CoA: step 1/1. In terms of biological role, component of the acetyl coenzyme A carboxylase (ACC) complex. Biotin carboxylase (BC) catalyzes the carboxylation of biotin on its carrier protein (BCCP) and then the CO(2) group is transferred by the transcarboxylase to acetyl-CoA to form malonyl-CoA. The sequence is that of Acetyl-coenzyme A carboxylase carboxyl transferase subunit beta from Crocosphaera subtropica (strain ATCC 51142 / BH68) (Cyanothece sp. (strain ATCC 51142)).